Reading from the N-terminus, the 179-residue chain is FAD-dependent monooxygenase nscC (179 aa).

A signal peptide spans 1–21 (MGKQQETILIIGAGISGLATS). Residues Glu-35 and Ala-46 each coordinate FAD. A glycan (N-linked (GlcNAc...) asparagine) is linked at Asn-92. Arg-119 is an FAD binding site. Asn-170 carries N-linked (GlcNAc...) asparagine glycosylation.

It belongs to the paxM FAD-dependent monooxygenase family. It depends on FAD as a cofactor.

It functions in the pathway secondary metabolite biosynthesis. Its function is as follows. FAD-dependent monooxygenase; part of the gene cluster that mediates the biosynthesis of neosartoricin B, a prenylated anthracenone that probably exhibits T-cell antiproliferative activity, suggestive of a physiological role as an immunosuppressive agent. The non-reducing polyketide synthase nscA probably synthesizes and cyclizes the decaketide backbone. The hydrolase nscB then mediates the product release through hydrolysis followed by spontaneous decarboxylation. The prenyltransferase nscD catalyzes the addition of the dimethylallyl group to the aromatic C5. The FAD-dependent monooxygenase nscC is then responsible for the stereospecific hydroxylation at C2. Neosartoricin B can be converted into two additional compounds neosartoricins C and D. Neosartoricin C is a spirocyclic compound that is cyclized through the attack of C3 hydroxyl on C14, followed by dehydration. On the other hand, neosartoricin D is a further cyclized compound in which attack of C2 on C14 in neosartoricin C results in the formation of the acetal-containing dioxabicyclo-octanone ring. Both of these compounds are novel and possibly represent related metabolites of the gene cluster. The polypeptide is FAD-dependent monooxygenase nscC (Trichophyton equinum (strain ATCC MYA-4606 / CBS 127.97) (Horse ringworm fungus)).